A 547-amino-acid chain; its full sequence is Serine/threonine-protein kinase pkn3 (547 aa).

The Protein kinase domain occupies 18-288 (YRVEALIGEG…EAFKAELQAV (271 aa)). ATP is bound by residues 24–32 (IGEGGMGKV) and lysine 47. Aspartate 142 acts as the Proton acceptor in catalysis. Residues 290–299 (KERRRMDSAP) are compositionally biased toward basic and acidic residues. The tract at residues 290-327 (KERRRMDSAPRRSANSSAVLAPLPRKSAASPQSDVRDA) is disordered.

It belongs to the protein kinase superfamily. Ser/Thr protein kinase family.

The enzyme catalyses L-seryl-[protein] + ATP = O-phospho-L-seryl-[protein] + ADP + H(+). It carries out the reaction L-threonyl-[protein] + ATP = O-phospho-L-threonyl-[protein] + ADP + H(+). This Myxococcus xanthus protein is Serine/threonine-protein kinase pkn3 (pkn3).